The chain runs to 448 residues: tRNA modification GTPase MnmE (448 aa).

(6S)-5-formyl-5,6,7,8-tetrahydrofolate contacts are provided by Arg-24, Glu-81, and Lys-120. Residues 216–373 (GLNVVLVGAP…LKRTLLREAG (158 aa)) form the TrmE-type G domain. Asn-226 serves as a coordination point for K(+). Residues 226–231 (NVGKSS), 245–251 (TDIAGTT), and 270–273 (DTAG) contribute to the GTP site. Ser-230 is a Mg(2+) binding site. 3 residues coordinate K(+): Thr-245, Ile-247, and Thr-250. Thr-251 contributes to the Mg(2+) binding site. Lys-448 contributes to the (6S)-5-formyl-5,6,7,8-tetrahydrofolate binding site.

It belongs to the TRAFAC class TrmE-Era-EngA-EngB-Septin-like GTPase superfamily. TrmE GTPase family. In terms of assembly, homodimer. Heterotetramer of two MnmE and two MnmG subunits. Requires K(+) as cofactor.

The protein resides in the cytoplasm. In terms of biological role, exhibits a very high intrinsic GTPase hydrolysis rate. Involved in the addition of a carboxymethylaminomethyl (cmnm) group at the wobble position (U34) of certain tRNAs, forming tRNA-cmnm(5)s(2)U34. This chain is tRNA modification GTPase MnmE, found in Neisseria meningitidis serogroup C / serotype 2a (strain ATCC 700532 / DSM 15464 / FAM18).